The primary structure comprises 445 residues: Glutamate--tRNA ligase 1 (445 aa).

A 'HIGH' region motif is present at residues 9 to 19 (PSPTGYLHVGN). Residues 238–242 (KISKR) carry the 'KMSKS' region motif. Residue Lys-241 coordinates ATP.

This sequence belongs to the class-I aminoacyl-tRNA synthetase family. Glutamate--tRNA ligase type 1 subfamily. In terms of assembly, monomer.

It is found in the cytoplasm. The enzyme catalyses tRNA(Glu) + L-glutamate + ATP = L-glutamyl-tRNA(Glu) + AMP + diphosphate. In terms of biological role, catalyzes the attachment of glutamate to tRNA(Glu) in a two-step reaction: glutamate is first activated by ATP to form Glu-AMP and then transferred to the acceptor end of tRNA(Glu). The chain is Glutamate--tRNA ligase 1 from Ehrlichia ruminantium (strain Gardel).